The sequence spans 212 residues: Uracil phosphoribosyltransferase (212 aa).

Residues Arg78, Arg103, and 130–138 (DPMLATGGS) contribute to the 5-phospho-alpha-D-ribose 1-diphosphate site. Uracil contacts are provided by residues Ile193 and 198 to 200 (GDA). Asp199 contacts 5-phospho-alpha-D-ribose 1-diphosphate.

This sequence belongs to the UPRTase family. Requires Mg(2+) as cofactor.

The catalysed reaction is UMP + diphosphate = 5-phospho-alpha-D-ribose 1-diphosphate + uracil. The protein operates within pyrimidine metabolism; UMP biosynthesis via salvage pathway; UMP from uracil: step 1/1. Allosterically activated by GTP. Catalyzes the conversion of uracil and 5-phospho-alpha-D-ribose 1-diphosphate (PRPP) to UMP and diphosphate. The protein is Uracil phosphoribosyltransferase of Pseudomonas aeruginosa (strain LESB58).